Reading from the N-terminus, the 59-residue chain is Aedesin (59 aa).

The N-terminal stretch at 1 to 23 is a signal peptide; it reads MNFTKLFAIVLLAALVLLGQTEA.

It belongs to the cecropin family. Salivary gland (at protein level).

It localises to the secreted. Functionally, antimicrobial peptide. Exhibits antibacterial activity against Gram-negative bacteria, such as Escherichia coli, Pseudomonas aeruginosa, Acinetobacter baumannii and Klebsiella pneumoniae. Shows no antibacterial effects against Gram-positive bacteria, such as Staphylococcus aureus, Enterococcus faecalis and Enterococcus faecium. Exhibits antiviral activity against all four dengue virus serotypes and chikungunya virus. Exhibits leishmanicidal activity. Partially neutralizes lipopolysaccharides (LPS). Exhibits anti-inflammatory properties: inhibits LPS-induced iNOS/NOS2 transcription, nitric oxide (NO) and pro-inflammatory cytokine production in mouse macrophages and human peripheral blood mononuclear cells (PBMCs); inhibits LPS-induced activation of MAPK and NF-kappa-B signaling pathways in mouse macrophages. The protein is Aedesin of Aedes aegypti (Yellowfever mosquito).